We begin with the raw amino-acid sequence, 292 residues long: Protoheme IX farnesyltransferase (292 aa).

Helical transmembrane passes span 12–32, 43–63, 94–114, 115–135, 144–164, 169–189, 216–236, 239–259, and 267–287; these read ITWL…PQAS, LLRL…TAAL, LAFG…GVNL, LSAG…TPMK, VGAI…AGGL, WVLF…IAWM, IVIY…LGMS, LYLV…VRVA, and ARGV…LMLL.

Belongs to the UbiA prenyltransferase family. Protoheme IX farnesyltransferase subfamily.

It localises to the cell inner membrane. The catalysed reaction is heme b + (2E,6E)-farnesyl diphosphate + H2O = Fe(II)-heme o + diphosphate. Its pathway is porphyrin-containing compound metabolism; heme O biosynthesis; heme O from protoheme: step 1/1. Converts heme B (protoheme IX) to heme O by substitution of the vinyl group on carbon 2 of heme B porphyrin ring with a hydroxyethyl farnesyl side group. In Solibacter usitatus (strain Ellin6076), this protein is Protoheme IX farnesyltransferase.